The chain runs to 129 residues: Small ribosomal subunit protein uS11 (129 aa).

It belongs to the universal ribosomal protein uS11 family. Part of the 30S ribosomal subunit. Interacts with proteins S7 and S18. Binds to IF-3.

Functionally, located on the platform of the 30S subunit, it bridges several disparate RNA helices of the 16S rRNA. Forms part of the Shine-Dalgarno cleft in the 70S ribosome. This Buchnera aphidicola subsp. Baizongia pistaciae (strain Bp) protein is Small ribosomal subunit protein uS11.